Here is a 102-residue protein sequence, read N- to C-terminus: Small ribosomal subunit protein uS10 (102 aa).

Belongs to the universal ribosomal protein uS10 family. In terms of assembly, part of the 30S ribosomal subunit.

Involved in the binding of tRNA to the ribosomes. This is Small ribosomal subunit protein uS10 from Clavibacter michiganensis subsp. michiganensis (strain NCPPB 382).